The following is a 421-amino-acid chain: CinA-like protein (421 aa).

It belongs to the CinA family.

In Myxococcus xanthus (strain DK1622), this protein is CinA-like protein.